Consider the following 266-residue polypeptide: Dioicin-2 (266 aa).

Cystine bridges form between cysteine 32–cysteine 263 and cysteine 85–cysteine 102. Glutamate 176 is a catalytic residue.

It localises to the secreted. The protein localises to the extracellular space. It is found in the golgi apparatus. The protein resides in the vacuole. It carries out the reaction Endohydrolysis of the N-glycosidic bond at one specific adenosine on the 28S rRNA.. Functionally, nicks pBR322 dsDNA. Has adenine polynucleotide glycosidase activity on herring sperm ssDNA. The sequence is that of Dioicin-2 from Phytolacca dioica (Bella sombra tree).